The following is a 619-amino-acid chain: Dihydroxy-acid dehydratase 1 (619 aa).

Position 81 (aspartate 81) interacts with Mg(2+). Cysteine 122 contacts [2Fe-2S] cluster. Residues aspartate 123 and lysine 124 each coordinate Mg(2+). At lysine 124 the chain carries N6-carboxylysine. Cysteine 198 serves as a coordination point for [2Fe-2S] cluster. Position 494 (glutamate 494) interacts with Mg(2+). The active-site Proton acceptor is serine 520.

Belongs to the IlvD/Edd family. In terms of assembly, homodimer. [2Fe-2S] cluster serves as cofactor. The cofactor is Mg(2+).

It catalyses the reaction (2R)-2,3-dihydroxy-3-methylbutanoate = 3-methyl-2-oxobutanoate + H2O. The enzyme catalyses (2R,3R)-2,3-dihydroxy-3-methylpentanoate = (S)-3-methyl-2-oxopentanoate + H2O. It functions in the pathway amino-acid biosynthesis; L-isoleucine biosynthesis; L-isoleucine from 2-oxobutanoate: step 3/4. Its pathway is amino-acid biosynthesis; L-valine biosynthesis; L-valine from pyruvate: step 3/4. Functions in the biosynthesis of branched-chain amino acids. Catalyzes the dehydration of (2R,3R)-2,3-dihydroxy-3-methylpentanoate (2,3-dihydroxy-3-methylvalerate) into 2-oxo-3-methylpentanoate (2-oxo-3-methylvalerate) and of (2R)-2,3-dihydroxy-3-methylbutanoate (2,3-dihydroxyisovalerate) into 2-oxo-3-methylbutanoate (2-oxoisovalerate), the penultimate precursor to L-isoleucine and L-valine, respectively. This chain is Dihydroxy-acid dehydratase 1, found in Bordetella bronchiseptica (strain ATCC BAA-588 / NCTC 13252 / RB50) (Alcaligenes bronchisepticus).